A 301-amino-acid polypeptide reads, in one-letter code: Protoheme IX farnesyltransferase 1 (301 aa).

A run of 9 helical transmembrane segments spans residues 29–49 (VVAL…PTAV), 51–71 (VQPL…AAAL), 101–121 (ALIF…VLVN), 123–143 (LTAW…TAYL), 150–170 (NIVI…TAVT), 177–197 (ALLL…ALAI), 223–243 (CILL…LVGM), 244–264 (CGPM…YKAW), and 281–301 (FSIY…YLWS).

It belongs to the UbiA prenyltransferase family. Protoheme IX farnesyltransferase subfamily.

Its subcellular location is the cell inner membrane. The catalysed reaction is heme b + (2E,6E)-farnesyl diphosphate + H2O = Fe(II)-heme o + diphosphate. Its pathway is porphyrin-containing compound metabolism; heme O biosynthesis; heme O from protoheme: step 1/1. Its function is as follows. Converts heme B (protoheme IX) to heme O by substitution of the vinyl group on carbon 2 of heme B porphyrin ring with a hydroxyethyl farnesyl side group. The sequence is that of Protoheme IX farnesyltransferase 1 from Shewanella putrefaciens (strain CN-32 / ATCC BAA-453).